Here is a 227-residue protein sequence, read N- to C-terminus: 2,3-bisphosphoglycerate-dependent phosphoglycerate mutase (227 aa).

Substrate-binding positions include 7-14 (RHGFSEWN), 20-21 (TG), R59, 86-89 (ERHY), K97, 113-114 (RR), and 182-183 (GN). H8 functions as the Tele-phosphohistidine intermediate in the catalytic mechanism. The active-site Proton donor/acceptor is the E86.

This sequence belongs to the phosphoglycerate mutase family. BPG-dependent PGAM subfamily. In terms of assembly, homodimer.

It catalyses the reaction (2R)-2-phosphoglycerate = (2R)-3-phosphoglycerate. It functions in the pathway carbohydrate degradation; glycolysis; pyruvate from D-glyceraldehyde 3-phosphate: step 3/5. Functionally, catalyzes the interconversion of 2-phosphoglycerate and 3-phosphoglycerate. In Actinobacillus pleuropneumoniae serotype 5b (strain L20), this protein is 2,3-bisphosphoglycerate-dependent phosphoglycerate mutase.